Reading from the N-terminus, the 473-residue chain is Arginine biosynthesis bifunctional protein ArgJ, mitochondrial (473 aa).

Residues Thr-201, Lys-230, Thr-241, Glu-328, Asn-468, and Thr-473 each coordinate substrate. The active-site Nucleophile is Thr-241.

This sequence belongs to the ArgJ family. Heterodimer of an alpha and a beta chain. Post-translationally, the alpha and beta chains are autoproteolytically processed from a single precursor protein within the mitochondrion.

It is found in the mitochondrion matrix. The enzyme catalyses N(2)-acetyl-L-ornithine + L-glutamate = N-acetyl-L-glutamate + L-ornithine. It carries out the reaction L-glutamate + acetyl-CoA = N-acetyl-L-glutamate + CoA + H(+). It functions in the pathway amino-acid biosynthesis; L-arginine biosynthesis; L-ornithine and N-acetyl-L-glutamate from L-glutamate and N(2)-acetyl-L-ornithine (cyclic): step 1/1. Its pathway is amino-acid biosynthesis; L-arginine biosynthesis; N(2)-acetyl-L-ornithine from L-glutamate: step 1/4. Catalyzes two activities which are involved in the cyclic version of arginine biosynthesis: the synthesis of acetylglutamate from glutamate and acetyl-CoA, and of ornithine by transacetylation between acetylornithine and glutamate. The chain is Arginine biosynthesis bifunctional protein ArgJ, mitochondrial from Ajellomyces capsulatus (strain G186AR / H82 / ATCC MYA-2454 / RMSCC 2432) (Darling's disease fungus).